Consider the following 430-residue polypeptide: Gamma-glutamyl phosphate reductase (430 aa).

This sequence belongs to the gamma-glutamyl phosphate reductase family.

Its subcellular location is the cytoplasm. It carries out the reaction L-glutamate 5-semialdehyde + phosphate + NADP(+) = L-glutamyl 5-phosphate + NADPH + H(+). Its pathway is amino-acid biosynthesis; L-proline biosynthesis; L-glutamate 5-semialdehyde from L-glutamate: step 2/2. In terms of biological role, catalyzes the NADPH-dependent reduction of L-glutamate 5-phosphate into L-glutamate 5-semialdehyde and phosphate. The product spontaneously undergoes cyclization to form 1-pyrroline-5-carboxylate. The polypeptide is Gamma-glutamyl phosphate reductase (Rhodopseudomonas palustris (strain TIE-1)).